A 150-amino-acid chain; its full sequence is Ribosome maturation factor RimP (150 aa).

Belongs to the RimP family.

It localises to the cytoplasm. Its function is as follows. Required for maturation of 30S ribosomal subunits. This is Ribosome maturation factor RimP from Thermotoga petrophila (strain ATCC BAA-488 / DSM 13995 / JCM 10881 / RKU-1).